Reading from the N-terminus, the 390-residue chain is Transposase for insertion sequence element IS256 in transposon Tn4001 (390 aa).

This sequence belongs to the transposase mutator family.

Functionally, required for the transposition of the insertion element. The sequence is that of Transposase for insertion sequence element IS256 in transposon Tn4001 from Enterococcus faecalis (strain ATCC 700802 / V583).